Here is a 552-residue protein sequence, read N- to C-terminus: Glutamine--tRNA ligase (552 aa).

Residues Pro34–His44 carry the 'HIGH' region motif. Residues Glu35–Asn37 and His41–Ser47 each bind ATP. The L-glutamine site is built by Asp67 and Tyr212. ATP is bound by residues Thr231, Arg261–Leu262, and Met269–Lys271. The short motif at Leu268–Arg272 is the 'KMSKS' region element.

The protein belongs to the class-I aminoacyl-tRNA synthetase family. Monomer.

It is found in the cytoplasm. It catalyses the reaction tRNA(Gln) + L-glutamine + ATP = L-glutaminyl-tRNA(Gln) + AMP + diphosphate. The chain is Glutamine--tRNA ligase from Hamiltonella defensa subsp. Acyrthosiphon pisum (strain 5AT).